Reading from the N-terminus, the 25-residue chain is Antithrombin-III (25 aa).

This sequence belongs to the serpin family. In terms of assembly, forms protease inhibiting heterodimer with TMPRSS7. In terms of processing, phosphorylated by FAM20C in the extracellular medium. Plasma.

Its subcellular location is the secreted. The protein resides in the extracellular space. Its function is as follows. Most important serine protease inhibitor in plasma that regulates the blood coagulation cascade. AT-III inhibits thrombin, matriptase-3/TMPRSS7, as well as factors IXa, Xa and XIa. Its inhibitory activity is greatly enhanced in the presence of heparin. This is Antithrombin-III (SERPINC1) from Mesocricetus auratus (Golden hamster).